The chain runs to 160 residues: Transcription elongation factor GreA (160 aa).

A coiled-coil region spans residues 49–75; sequence SEYDEAKNDQAFTEGKILQLENKLKNA.

The protein belongs to the GreA/GreB family.

Its function is as follows. Necessary for efficient RNA polymerase transcription elongation past template-encoded arresting sites. The arresting sites in DNA have the property of trapping a certain fraction of elongating RNA polymerases that pass through, resulting in locked ternary complexes. Cleavage of the nascent transcript by cleavage factors such as GreA or GreB allows the resumption of elongation from the new 3'terminus. GreA releases sequences of 2 to 3 nucleotides. The chain is Transcription elongation factor GreA from Clostridium botulinum (strain Alaska E43 / Type E3).